A 273-amino-acid chain; its full sequence is 4-hydroxy-tetrahydrodipicolinate reductase (273 aa).

NAD(+)-binding positions include 12–17 (GAGGRM) and Glu-38. Arg-39 lines the NADP(+) pocket. Residues 102–104 (GTT) and 126–129 (AANF) contribute to the NAD(+) site. His-159 (proton donor/acceptor) is an active-site residue. Residue His-160 coordinates (S)-2,3,4,5-tetrahydrodipicolinate. Lys-163 (proton donor) is an active-site residue. 169–170 (GT) contacts (S)-2,3,4,5-tetrahydrodipicolinate.

It belongs to the DapB family. In terms of assembly, homotetramer.

The protein localises to the cytoplasm. It catalyses the reaction (S)-2,3,4,5-tetrahydrodipicolinate + NAD(+) + H2O = (2S,4S)-4-hydroxy-2,3,4,5-tetrahydrodipicolinate + NADH + H(+). The catalysed reaction is (S)-2,3,4,5-tetrahydrodipicolinate + NADP(+) + H2O = (2S,4S)-4-hydroxy-2,3,4,5-tetrahydrodipicolinate + NADPH + H(+). It participates in amino-acid biosynthesis; L-lysine biosynthesis via DAP pathway; (S)-tetrahydrodipicolinate from L-aspartate: step 4/4. Its function is as follows. Catalyzes the conversion of 4-hydroxy-tetrahydrodipicolinate (HTPA) to tetrahydrodipicolinate. In Enterobacter sp. (strain 638), this protein is 4-hydroxy-tetrahydrodipicolinate reductase.